A 562-amino-acid polypeptide reads, in one-letter code: Arginine--tRNA ligase (562 aa).

Positions 121–131 (PNIAKPISMGH) match the 'HIGH' region motif.

It belongs to the class-I aminoacyl-tRNA synthetase family. Monomer.

Its subcellular location is the cytoplasm. The catalysed reaction is tRNA(Arg) + L-arginine + ATP = L-arginyl-tRNA(Arg) + AMP + diphosphate. In Lactiplantibacillus plantarum (strain ATCC BAA-793 / NCIMB 8826 / WCFS1) (Lactobacillus plantarum), this protein is Arginine--tRNA ligase.